A 631-amino-acid chain; its full sequence is DNA mismatch repair protein MutL (631 aa).

2 disordered regions span residues 337–362 (PHSPQIDDSSPYVKPETESSAFELQS) and 400–429 (AVQSNAFGSMSVPRETRSGSSGESRPRAEL).

Belongs to the DNA mismatch repair MutL/HexB family.

Functionally, this protein is involved in the repair of mismatches in DNA. It is required for dam-dependent methyl-directed DNA mismatch repair. May act as a 'molecular matchmaker', a protein that promotes the formation of a stable complex between two or more DNA-binding proteins in an ATP-dependent manner without itself being part of a final effector complex. The protein is DNA mismatch repair protein MutL of Shewanella oneidensis (strain ATCC 700550 / JCM 31522 / CIP 106686 / LMG 19005 / NCIMB 14063 / MR-1).